A 69-amino-acid polypeptide reads, in one-letter code: Conotoxin Eb6.20 (69 aa).

The first 17 residues, 1-17 (VLIIAVLFLTACQLTTA), serve as a signal peptide directing secretion. The propeptide occupies 18–41 (ETYSRGRQKHRARRSTDKNSKWTR). 3 disulfide bridges follow: Cys43–Cys57, Cys50–Cys61, and Cys56–Cys68.

This sequence belongs to the conotoxin O1 superfamily. Expressed by the venom duct.

It is found in the secreted. The protein is Conotoxin Eb6.20 (E1) of Conus ebraeus (Hebrew cone).